The following is a 356-amino-acid chain: Heat-inducible transcription repressor HrcA (356 aa).

It belongs to the HrcA family.

Functionally, negative regulator of class I heat shock genes (grpE-dnaK-dnaJ and groELS operons). Prevents heat-shock induction of these operons. The chain is Heat-inducible transcription repressor HrcA from Gluconobacter oxydans (strain 621H) (Gluconobacter suboxydans).